We begin with the raw amino-acid sequence, 132 residues long: Phosphomevalonate dehydratase small subunit (132 aa).

Residue S61 is the Proton acceptor of the active site.

Belongs to the AcnX type II small subunit family. As to quaternary structure, heterodimer composed of a large subunit (PMDh-L) and a small subunit (PMDh-S).

The enzyme catalyses (R)-5-phosphomevalonate = (2E)-3-methyl-5-phosphooxypent-2-enoate + H2O. It functions in the pathway isoprenoid biosynthesis; isopentenyl diphosphate biosynthesis via mevalonate pathway. In terms of biological role, component of a hydro-lyase that catalyzes the dehydration of mevalonate 5-phosphate (MVA5P) to form trans-anhydromevalonate 5-phosphate (tAHMP). Involved in the archaeal mevalonate (MVA) pathway, which provides fundamental precursors for isoprenoid biosynthesis, such as isopentenyl diphosphate (IPP) and dimethylallyl diphosphate (DMAPP). The protein is Phosphomevalonate dehydratase small subunit of Archaeoglobus fulgidus (strain ATCC 49558 / DSM 4304 / JCM 9628 / NBRC 100126 / VC-16).